The sequence spans 491 residues: Glutamate--tRNA ligase (491 aa).

The 'HIGH' region signature appears at 9-19; it reads PSPTGTPHVGL. The short motif at 253 to 257 is the 'KMSKS' region element; the sequence is KLSKR. Lys256 provides a ligand contact to ATP.

Belongs to the class-I aminoacyl-tRNA synthetase family. Glutamate--tRNA ligase type 1 subfamily. Monomer.

It is found in the cytoplasm. The catalysed reaction is tRNA(Glu) + L-glutamate + ATP = L-glutamyl-tRNA(Glu) + AMP + diphosphate. In terms of biological role, catalyzes the attachment of glutamate to tRNA(Glu) in a two-step reaction: glutamate is first activated by ATP to form Glu-AMP and then transferred to the acceptor end of tRNA(Glu). The sequence is that of Glutamate--tRNA ligase from Mycolicibacterium gilvum (strain PYR-GCK) (Mycobacterium gilvum (strain PYR-GCK)).